A 595-amino-acid polypeptide reads, in one-letter code: DNA mismatch repair protein MutL (595 aa).

It belongs to the DNA mismatch repair MutL/HexB family.

This protein is involved in the repair of mismatches in DNA. It is required for dam-dependent methyl-directed DNA mismatch repair. May act as a 'molecular matchmaker', a protein that promotes the formation of a stable complex between two or more DNA-binding proteins in an ATP-dependent manner without itself being part of a final effector complex. This is DNA mismatch repair protein MutL from Rhodopseudomonas palustris (strain TIE-1).